A 242-amino-acid chain; its full sequence is Phosphatidylcholine synthase (242 aa).

Residues 1 to 15 (MKIFNYKRVPYAEMR) are Cytoplasmic-facing. The chain crosses the membrane as a helical span at residues 16-36 (AFSVHILTASGSFLAFLGVVA). Residues 37-41 (AAEHR) lie on the Periplasmic side of the membrane. A helical transmembrane segment spans residues 42-62 (FIDMFWWLGLALLVDGIDGPI). Residues 63 to 76 (ARKVRVKEVLPNWS) are Cytoplasmic-facing. Residues 77–97 (GDTLDNIIDYVTYVLLPAFAL) form a helical membrane-spanning segment. The Periplasmic segment spans residues 98-100 (YQS). A helical membrane pass occupies residues 101–121 (GMIGEPWSFVAAGMIVVSSAI). Over 122–133 (YYADMGMKTDEY) the chain is Cytoplasmic. A helical membrane pass occupies residues 134–154 (FFSGFPVVWNMIVFTLFVIDA). At 155–159 (SATTA) the chain is on the periplasmic side. The helical transmembrane segment at 160 to 180 (LTVVIVSVVLTFLPINFLHPV) threads the bilayer. The Cytoplasmic portion of the chain corresponds to 181–187 (RVKRLRP). Residues 188-208 (LNLGVFFLWSALGIFSLLMHF) form a helical membrane-spanning segment. Residues 209 to 214 (DTPEWA) lie on the Periplasmic side of the membrane. A helical membrane pass occupies residues 215–235 (LILFIVTGAYLYVIGAVLQFF). Residues 236–242 (PALGRET) are Cytoplasmic-facing.

The protein belongs to the CDP-alcohol phosphatidyltransferase class-I family. It depends on Mn(2+) as a cofactor.

The protein resides in the cell inner membrane. The catalysed reaction is a CDP-1,2-diacyl-sn-glycerol + choline = a 1,2-diacyl-sn-glycero-3-phosphocholine + CMP + H(+). Its function is as follows. Condenses choline with CDP-diglyceride to produce phosphatidylcholine and CMP. This chain is Phosphatidylcholine synthase, found in Rhizobium johnstonii (strain DSM 114642 / LMG 32736 / 3841) (Rhizobium leguminosarum bv. viciae).